A 237-amino-acid chain; its full sequence is Pheromone-regulated membrane protein 8 (237 aa).

Residues 1 to 47 (MQTPSENTNAKSDSLDEPGAYLIEENVALPKDIFHSYLSYWIYEAAH) are Cytoplasmic-facing. A helical membrane pass occupies residues 48–68 (CTPVMLLSLVIGVLISIIILF). The Extracellular segment spans residues 69–74 (HDNENC). Residues 75-95 (VGVSVGFLLIFSGILVIVLIL) traverse the membrane as a helical segment. The Cytoplasmic segment spans residues 96–237 (RFGPQISDED…QEYPGVDEFF (142 aa)). Residues 174 to 201 (SSASNVKDAQSNDETAGTPNEAAESSSF) form a disordered region. Residues 236-237 (FF) form a COPII binding region.

This sequence belongs to the DUP/COS family. As to quaternary structure, interacts with PRM9. Binds to SEC23/24 of COPII coated vesicles.

It localises to the membrane. The protein resides in the endoplasmic reticulum. Functionally, may be involved in endoplasmic reticulum exit trafficking of proteins. In Saccharomyces cerevisiae (strain ATCC 204508 / S288c) (Baker's yeast), this protein is Pheromone-regulated membrane protein 8 (PRM8).